The primary structure comprises 157 residues: Ribosomal RNA large subunit methyltransferase H (157 aa).

Residues Leu-73, Gly-105, and 124 to 129 each bind S-adenosyl-L-methionine; that span reads LSKMTF.

It belongs to the RNA methyltransferase RlmH family. In terms of assembly, homodimer.

The protein localises to the cytoplasm. It catalyses the reaction pseudouridine(1915) in 23S rRNA + S-adenosyl-L-methionine = N(3)-methylpseudouridine(1915) in 23S rRNA + S-adenosyl-L-homocysteine + H(+). Specifically methylates the pseudouridine at position 1915 (m3Psi1915) in 23S rRNA. The sequence is that of Ribosomal RNA large subunit methyltransferase H from Phocaeicola vulgatus (strain ATCC 8482 / DSM 1447 / JCM 5826 / CCUG 4940 / NBRC 14291 / NCTC 11154) (Bacteroides vulgatus).